The primary structure comprises 746 residues: Quiannulatene synthase (746 aa).

A sesterterpenoid synthase region spans residues 1 to 336 (MASEVIVISD…SRYPTKTELN (336 aa)). A Mg(2+)-binding site is contributed by Asp95. The geranylfarnesyl diphosphate synthase stretch occupies residues 338-746 (PEVIIVDGEL…VELMLRRLWV (409 aa)). The isopentenyl diphosphate site is built by Lys465, Arg468, and His497. Residues Asp504 and Asp508 each contribute to the Mg(2+) site. A dimethylallyl diphosphate-binding site is contributed by Arg513. Arg514 lines the isopentenyl diphosphate pocket. Residues Lys591, Thr592, Gln628, Asn635, and Lys645 each coordinate dimethylallyl diphosphate.

In the N-terminal section; belongs to the terpene synthase family. This sequence in the C-terminal section; belongs to the FPP/GGPP synthase family. Mg(2+) is required as a cofactor.

It catalyses the reaction isopentenyl diphosphate + (2E,6E)-farnesyl diphosphate = (2E,6E,10E)-geranylgeranyl diphosphate + diphosphate. The enzyme catalyses (2E,6E,10E,14E)-geranylfarnesyl diphosphate = quiannulatene + diphosphate. Its pathway is secondary metabolite biosynthesis; terpenoid biosynthesis. Bifunctional sesterterpene synthase; part of the gene cluster that mediates the biosynthesis of the pentacyclic sesterterpene quiannulatic acid. The first step of the pathway is performed by the sesterterpene synthase (QS) that possesses both prenyl transferase and terpene cyclase activity, converting isopentenyl diphosphate and dimethylallyl diphosphate into geranylfarnesyl diphosphate (GFPP) and further converting GFPP into quiannulatene via an unprecedented cyclization mode which involves three rounds of hydride shifts and two successive C-C bond migrations to construct the 5-6-5-5-5 fused ring. The cytochrome P450 monooxygenase Qnn-P450 then oxidizes quiannulatene at C-19 in 3 successive reactions to afford quiannulatic acid. This Emericella variicolor (Aspergillus stellatus) protein is Quiannulatene synthase.